The primary structure comprises 324 residues: Mitochondrial thiamine pyrophosphate carrier 1 (324 aa).

Solcar repeat units follow at residues 12 to 110 (GNRI…ISSA), 119 to 205 (PQPV…LRSP), and 212 to 307 (PFGT…VLGL). The next 6 helical transmembrane spans lie at 15 to 35 (IQVV…VAPL), 79 to 99 (ITGL…YGGI), 125 to 145 (FISG…LDLL), 182 to 202 (TAAI…YEAL), 218 to 238 (AGAG…LDLV), and 282 to 299 (GLTV…VTMW).

The protein belongs to the mitochondrial carrier (TC 2.A.29) family.

The protein localises to the mitochondrion inner membrane. Mitochondrial transporter that mediates uptake of thiamine pyrophosphate (ThPP) into mitochondria. The protein is Mitochondrial thiamine pyrophosphate carrier 1 (TPC1) of Ajellomyces capsulatus (strain NAm1 / WU24) (Darling's disease fungus).